We begin with the raw amino-acid sequence, 155 residues long: SsrA-binding protein (155 aa).

The protein belongs to the SmpB family.

Its subcellular location is the cytoplasm. Required for rescue of stalled ribosomes mediated by trans-translation. Binds to transfer-messenger RNA (tmRNA), required for stable association of tmRNA with ribosomes. tmRNA and SmpB together mimic tRNA shape, replacing the anticodon stem-loop with SmpB. tmRNA is encoded by the ssrA gene; the 2 termini fold to resemble tRNA(Ala) and it encodes a 'tag peptide', a short internal open reading frame. During trans-translation Ala-aminoacylated tmRNA acts like a tRNA, entering the A-site of stalled ribosomes, displacing the stalled mRNA. The ribosome then switches to translate the ORF on the tmRNA; the nascent peptide is terminated with the 'tag peptide' encoded by the tmRNA and targeted for degradation. The ribosome is freed to recommence translation, which seems to be the essential function of trans-translation. The protein is SsrA-binding protein of Chelativorans sp. (strain BNC1).